Reading from the N-terminus, the 416-residue chain is Protein MID1-COMPLEMENTING ACTIVITY 2 (416 aa).

The stretch at 191–219 (CEALKTEEEKLQLELQRSRARYDADQCEV) forms a coiled coil. Residues 338–354 (LIVYSLILSCCCYTCCI) form a helical membrane-spanning segment.

As to expression, expressed in roots, leaves, stems, flowers and siliques. In the root, high levels of expression in vascular tissues, in the stele and endodermis, but no expression in the cortex, epidermis, root cap, promeristem and adjacent elongation zone of the primary root. Not expressed in root hairs. Detected in shoot apical meristem, leaf mesophyll cells and vascular tissues, upper half of inflorescence, but not in petioles of rosette leaves.

It localises to the cell membrane. Inhibited by GdCl(3), but not by verapamil. Calcium-permeable stretch-activated channel component. Probably involved in mechanosensing and in mechano-stimulated calcium uptake mechanism. This Arabidopsis thaliana (Mouse-ear cress) protein is Protein MID1-COMPLEMENTING ACTIVITY 2 (MCA2).